The following is a 193-amino-acid chain: Large ribosomal subunit protein eL18 (193 aa).

The segment at H158 to K193 is disordered. The segment covering S183–K193 has biased composition (basic residues).

The protein belongs to the eukaryotic ribosomal protein eL18 family.

It localises to the cytoplasm. The sequence is that of Large ribosomal subunit protein eL18 (RPL18) from Trypanosoma cruzi (strain CL Brener).